The sequence spans 149 residues: Probable ubiquitin-conjugating enzyme E2 12 (149 aa).

Over residues 1–15 (MASKRISRELRDMQR) the composition is skewed to basic and acidic residues. A disordered region spans residues 1-22 (MASKRISRELRDMQRHPPANCS). One can recognise a UBC core domain in the interval 1 to 148 (MASKRISREL…AQKWTQKYAM (148 aa)). The active-site Glycyl thioester intermediate is the cysteine 86.

This sequence belongs to the ubiquitin-conjugating enzyme family. In terms of tissue distribution, ubiquitously expressed at very low levels.

The catalysed reaction is S-ubiquitinyl-[E1 ubiquitin-activating enzyme]-L-cysteine + [E2 ubiquitin-conjugating enzyme]-L-cysteine = [E1 ubiquitin-activating enzyme]-L-cysteine + S-ubiquitinyl-[E2 ubiquitin-conjugating enzyme]-L-cysteine.. It participates in protein modification; protein ubiquitination. In terms of biological role, accepts the ubiquitin from the E1 complex and catalyzes its covalent attachment to other proteins. The sequence is that of Probable ubiquitin-conjugating enzyme E2 12 (UBC12) from Arabidopsis thaliana (Mouse-ear cress).